Reading from the N-terminus, the 187-residue chain is Acireductone dioxygenase 4 (187 aa).

Ala2 bears the N-acetylalanine mark. Fe(2+) is bound by residues His89, His91, Glu95, and His134. His89, His91, Glu95, and His134 together coordinate Ni(2+).

This sequence belongs to the acireductone dioxygenase (ARD) family. The cofactor is Fe(2+). Ni(2+) is required as a cofactor.

The protein localises to the cytoplasm. It is found in the nucleus. It catalyses the reaction 1,2-dihydroxy-5-(methylsulfanyl)pent-1-en-3-one + O2 = 4-methylsulfanyl-2-oxobutanoate + formate + 2 H(+). The catalysed reaction is 1,2-dihydroxy-5-(methylsulfanyl)pent-1-en-3-one + O2 = 3-(methylsulfanyl)propanoate + CO + formate + 2 H(+). The protein operates within amino-acid biosynthesis; L-methionine biosynthesis via salvage pathway; L-methionine from S-methyl-5-thio-alpha-D-ribose 1-phosphate: step 5/6. Its function is as follows. Catalyzes 2 different reactions between oxygen and the acireductone 1,2-dihydroxy-3-keto-5-methylthiopentene (DHK-MTPene) depending upon the metal bound in the active site. Fe-containing acireductone dioxygenase (Fe-ARD) produces formate and 2-keto-4-methylthiobutyrate (KMTB), the alpha-ketoacid precursor of methionine in the methionine recycle pathway. Ni-containing acireductone dioxygenase (Ni-ARD) produces methylthiopropionate, carbon monoxide and formate, and does not lie on the methionine recycle pathway. In Arabidopsis thaliana (Mouse-ear cress), this protein is Acireductone dioxygenase 4 (ARD4).